We begin with the raw amino-acid sequence, 436 residues long: GTPase Der (436 aa).

EngA-type G domains follow at residues 4 to 167 and 176 to 351; these read PVVA…PKDH and IKFC…DNHA. Residues 10-17, 57-61, 119-122, 182-189, 229-233, and 294-297 contribute to the GTP site; these read GRPNVGKS, DTGGI, NKID, DTAGM, and NKWD. A KH-like domain is found at 352–436; it reads MRVQTNVLNE…PIKIIARPRK (85 aa).

The protein belongs to the TRAFAC class TrmE-Era-EngA-EngB-Septin-like GTPase superfamily. EngA (Der) GTPase family. As to quaternary structure, associates with the 50S ribosomal subunit.

Its function is as follows. GTPase that plays an essential role in the late steps of ribosome biogenesis. The sequence is that of GTPase Der from Geobacillus thermodenitrificans (strain NG80-2).